The sequence spans 432 residues: Fibroleukin (432 aa).

The N-terminal stretch at 1–19 (MRLPGWLWLSSAVLAACRA) is a signal peptide. Asn24 carries an N-linked (GlcNAc...) asparagine glycan. The stretch at 71 to 157 (GSMEEVLKEV…QGRLETLHLV (87 aa)) forms a coiled coil. The disordered stretch occupies residues 100–122 (QADDHRDPGGNGGNGAETAEDSR). Asn172, Asn228, Asn256, and Asn329 each carry an N-linked (GlcNAc...) asparagine glycan. A Fibrinogen C-terminal domain is found at 197–429 (PVQHLIYKDC…QAKMMIRPKN (233 aa)). Cysteines 206 and 235 form a disulfide. A disulfide bridge links Cys364 with Cys377.

In terms of assembly, homotetramer; disulfide-linked. In terms of tissue distribution, constitutively expressed in cytotoxic T-cells.

The protein resides in the secreted. Functionally, converts prothrombin to thrombin. This chain is Fibroleukin (Fgl2), found in Mus musculus (Mouse).